The chain runs to 313 residues: MAEQQKVLGMPPFVADFLMGGVSAAVSKTAAAPIERIKLLVQNQDEMIRAGRLDRRYNGIIDCFKRTTADEGVMALWRGNTANVIRYFPTQALNFAFRDKFKKMFGYKKDVDGYWKWMAGNLASGGAAGATSLLFVYSLDYARTRLANDAKSAKKGGERQFNGLVDVYRKTIASDGIAGLYRGFGPSVAGIVVYRGLYFGLYDSIKPVLLVGDLKNNFLASFALGWCVTTAAGIASYPLDTIRRRMMMTSGEAVKYKSSFDAASQIVAKEGVKSLFKGAGANILRGVAGAGVLSIYDQLQVLLFGKAFKGGSG.

Solcar repeat units lie at residues 11-104, 116-208, and 216-302; these read PPFV…FKKM, KWMA…IKPV, and NNFL…LQVL. Helical transmembrane passes span 13 to 40, 81 to 105, 114 to 134, 184 to 205, and 219 to 239; these read FVAD…IKLL, TANV…KKMF, YWKW…TSLL, FGPS…YDSI, and LASF…SYPL. ADP contacts are provided by Arg86 and Arg98. Arg243 lines the ADP pocket. Residues 243–248 are important for transport activity; it reads RRRMMM. Residues 243–248 carry the Nucleotide carrier signature motif motif; sequence RRRMMM. Residues 279 to 299 traverse the membrane as a helical segment; sequence AGANILRGVAGAGVLSIYDQL.

It belongs to the mitochondrial carrier (TC 2.A.29) family. As to quaternary structure, monomer.

It localises to the mitochondrion inner membrane. The enzyme catalyses ADP(in) + ATP(out) = ADP(out) + ATP(in). Its activity is regulated as follows. The matrix-open state (m-state) is inhibited by the membrane-permeable bongkrekic acid (BKA). The cytoplasmic-open state (c-state) is inhibited by the membrane-impermeable toxic inhibitor carboxyatractyloside (CATR). ADP:ATP antiporter that mediates import of ADP into the mitochondrial matrix for ATP synthesis, and export of ATP out to fuel the cell. Cycles between the cytoplasmic-open state (c-state) and the matrix-open state (m-state): operates by the alternating access mechanism with a single substrate-binding site intermittently exposed to either the cytosolic (c-state) or matrix (m-state) side of the inner mitochondrial membrane. The polypeptide is ADP,ATP carrier protein (aac) (Neurospora crassa (strain ATCC 24698 / 74-OR23-1A / CBS 708.71 / DSM 1257 / FGSC 987)).